We begin with the raw amino-acid sequence, 211 residues long: Uracil phosphoribosyltransferase (211 aa).

30-34 (KGLVR) is a GTP binding site. 5-phospho-alpha-D-ribose 1-diphosphate-binding positions include Arg-79, Arg-104, and 133–141 (DPMLATGIT). Residues Ile-197 and 202–204 (GDA) contribute to the uracil site. Asp-203 is a 5-phospho-alpha-D-ribose 1-diphosphate binding site.

The protein belongs to the UPRTase family. Mg(2+) serves as cofactor.

The catalysed reaction is UMP + diphosphate = 5-phospho-alpha-D-ribose 1-diphosphate + uracil. Its pathway is pyrimidine metabolism; UMP biosynthesis via salvage pathway; UMP from uracil: step 1/1. Its activity is regulated as follows. Allosterically activated by GTP. Its function is as follows. Catalyzes the conversion of uracil and 5-phospho-alpha-D-ribose 1-diphosphate (PRPP) to UMP and diphosphate. In Pyrobaculum islandicum (strain DSM 4184 / JCM 9189 / GEO3), this protein is Uracil phosphoribosyltransferase.